The sequence spans 247 residues: Golgi-associated RAB2 interactor protein 5A (247 aa).

Positions 1–16 (MGPPLWPDLQEPPPPG) are enriched in pro residues. 2 disordered regions span residues 1 to 22 (MGPPLWPDLQEPPPPGTSSQIR) and 60 to 92 (GDIAMRRDRGPKPALGGAGEVEPGGMAASPTGR).

This sequence belongs to the GARIN family. As to quaternary structure, interacts (via N-terminus) with RAB2B (in GTP-bound form).

Its subcellular location is the golgi apparatus. Functionally, RAB2B effector protein which promotes cytosolic DNA-induced innate immune responses. Regulates IFN responses against DNA viruses by regulating the CGAS-STING signaling axis. This is Golgi-associated RAB2 interactor protein 5A from Homo sapiens (Human).